Consider the following 215-residue polypeptide: 3-isopropylmalate dehydratase small subunit (215 aa).

This sequence belongs to the LeuD family. LeuD type 1 subfamily. Heterodimer of LeuC and LeuD.

The catalysed reaction is (2R,3S)-3-isopropylmalate = (2S)-2-isopropylmalate. Its pathway is amino-acid biosynthesis; L-leucine biosynthesis; L-leucine from 3-methyl-2-oxobutanoate: step 2/4. Catalyzes the isomerization between 2-isopropylmalate and 3-isopropylmalate, via the formation of 2-isopropylmaleate. This Ectopseudomonas mendocina (strain ymp) (Pseudomonas mendocina) protein is 3-isopropylmalate dehydratase small subunit.